A 137-amino-acid polypeptide reads, in one-letter code: Envelope glycoprotein L (137 aa).

Residues 1–22 (MRAVGVFLAICLVTIFVLPTWG) form the signal peptide. Residues 23-128 (NWAYPCCHVT…SVEDLFGANL (106 aa)) are interaction with gH. 2 disulfide bridges follow: C28/C56 and C29/C79.

It belongs to the herpesviridae glycoprotein L family. As to quaternary structure, interacts with glycoprotein H (gH); this interaction is necessary for the correct processing and cell surface expression of gH. The heterodimer gH/gL seems to interact with gB trimers during fusion. The heterodimer gH/gL interacts with host EPHA2 to facilitate virus internalization and fusion.

The protein resides in the virion membrane. Its subcellular location is the host cell membrane. It localises to the host Golgi apparatus. The protein localises to the host trans-Golgi network. Functionally, the heterodimer glycoprotein H-glycoprotein L is required for the fusion of viral and plasma membranes leading to virus entry into the host cell. Acts as a functional inhibitor of gH and maintains gH in an inhibited form. Upon binding to host integrins, gL dissociates from gH leading to activation of the viral fusion glycoproteins gB and gH. Fusion of EBV with B-lymphocytes requires the additional receptor-binding protein gp42, which forms a complex with gH/gL. The heterodimer gH/gL targets also host EPHA2 to promote viral entry. The sequence is that of Envelope glycoprotein L from Homo sapiens (Human).